The primary structure comprises 683 residues: Methionine--tRNA ligase (683 aa).

Residues 15–25 (YYPSGKLHIGN) carry the 'HIGH' region motif. Residues 311 to 315 (KMSKS) carry the 'KMSKS' region motif. ATP is bound at residue K314. One can recognise a tRNA-binding domain in the interval 581-683 (DFDKVELKVA…DNMVNGSLIS (103 aa)).

This sequence belongs to the class-I aminoacyl-tRNA synthetase family. MetG type 2B subfamily. Homodimer.

Its subcellular location is the cytoplasm. It catalyses the reaction tRNA(Met) + L-methionine + ATP = L-methionyl-tRNA(Met) + AMP + diphosphate. Is required not only for elongation of protein synthesis but also for the initiation of all mRNA translation through initiator tRNA(fMet) aminoacylation. In Lactiplantibacillus plantarum (strain ATCC BAA-793 / NCIMB 8826 / WCFS1) (Lactobacillus plantarum), this protein is Methionine--tRNA ligase.